The sequence spans 706 residues: Dihydroxyacetone synthase (706 aa).

Thiamine diphosphate contacts are provided by residues His-76 and Gly-126–Leu-128. Residues Asp-167, Asn-197, and Val-199 each coordinate Mg(2+). Residue Asn-197 participates in thiamine diphosphate binding. Positions 273, 431, and 459 each coordinate thiamine diphosphate. The Proton donor role is filled by Glu-431. The Microbody targeting signal signature appears at Asn-704–Leu-706.

The protein belongs to the transketolase family. Mg(2+) serves as cofactor. It depends on Ca(2+) as a cofactor. Requires Mn(2+) as cofactor. Co(2+) is required as a cofactor. The cofactor is thiamine diphosphate.

It localises to the peroxisome. The catalysed reaction is D-xylulose 5-phosphate + formaldehyde = dihydroxyacetone + D-glyceraldehyde 3-phosphate. In terms of biological role, involved in assimilation of formaldehyde. In Candida boidinii (Yeast), this protein is Dihydroxyacetone synthase (DAS1).